The following is a 502-amino-acid chain: MTLGSFRRGLLMLSVAFGLTRGDLAKPSKLVNCTCESPHCKRPFCQGSWCTVVLVREQGRHPQVYRGCGSLNQELCLGRPTEFLNHHCCYRSFCNHNVSLMLEATQTPSEEPEVDAHLPLILGPVLALPVLVALGALGLWRVRRRQEKQRDLHSDLGESSLILKASEQADSMLGDFLDSDCTTGSGSGLPFLVQRTVARQVALVECVGKGRYGEVWRGSWHGESVAVKIFSSRDEQSWFRETEIYNTVLLRHDNILGFIASDMTSRNSSTQLWLITHYHEHGSLYDFLQRQTLEPQLALRLAVSAACGLAHLHVEIFGTQGKPAIAHRDLKSRNVLVKSNLQCCIADLGLAVMHSQSSDYLDIGNNPRVGTKRYMAPEVLDEHIRTDCFESYKWTDIWAFGLVLWEIARRTIINGIVEDYRPPFYDMVPNDPSFEDMKKVVCVDQQTPTIPNRLAADPVLSGLAQMMRECWYPNPSARLTALRIKKTLQKLSHNPEKPKVIH.

A signal peptide spans 1-22; it reads MTLGSFRRGLLMLSVAFGLTRG. Residues 23-119 lie on the Extracellular side of the membrane; sequence DLAKPSKLVN…EEPEVDAHLP (97 aa). N32 carries N-linked (GlcNAc...) asparagine glycosylation. Cystine bridges form between C33–C50, C35–C40, and C45–C68. The interval 72–75 is mediates specificity for BMP ligand; it reads NQEL. 2 disulfides stabilise this stretch: C76/C88 and C89/C94. The N-linked (GlcNAc...) asparagine glycan is linked to N97. A helical transmembrane segment spans residues 120–140; the sequence is LILGPVLALPVLVALGALGLW. Topologically, residues 141 to 502 are cytoplasmic; it reads RVRRRQEKQR…HNPEKPKVIH (362 aa). Residues S154, S159, and S160 each carry the phosphoserine modification. The GS domain occupies 171–200; sequence SMLGDFLDSDCTTGSGSGLPFLVQRTVARQ. The Protein kinase domain occupies 201–502; that stretch reads VALVECVGKG…HNPEKPKVIH (302 aa). ATP is bound by residues 207 to 215 and K228; that span reads VGKGRYGEV. D329 acts as the Proton acceptor in catalysis.

The protein belongs to the protein kinase superfamily. TKL Ser/Thr protein kinase family. TGFB receptor subfamily. Interacts with TSC22D1/TSC-22. Mg(2+) is required as a cofactor. Requires Mn(2+) as cofactor.

It localises to the cell membrane. The enzyme catalyses L-threonyl-[receptor-protein] + ATP = O-phospho-L-threonyl-[receptor-protein] + ADP + H(+). It catalyses the reaction L-seryl-[receptor-protein] + ATP = O-phospho-L-seryl-[receptor-protein] + ADP + H(+). Type I receptor for TGF-beta family ligands BMP9/GDF2 and BMP10 and important regulator of normal blood vessel development. On ligand binding, forms a receptor complex consisting of two type II and two type I transmembrane serine/threonine kinases. Type II receptors phosphorylate and activate type I receptors which autophosphorylate, then bind and activate SMAD transcriptional regulators. May bind activin as well. In Mus musculus (Mouse), this protein is Activin receptor type-1-like (Acvrl1).